A 450-amino-acid polypeptide reads, in one-letter code: Trehalose/maltose-binding protein MalE (450 aa).

An N-terminal signal peptide occupies residues 1 to 24 (MNVKKVLLGLFLVGVLGIAVVASG). Residues glutamate 57, threonine 84, arginine 89, aspartate 110, tyrosine 161, aspartate 163, tyrosine 217, glutamate 279, tryptophan 297, tyrosine 299, glycine 334, tryptophan 335, tryptophan 371, and arginine 404 each coordinate alpha,alpha-trehalose.

It belongs to the bacterial solute-binding protein 1 family. As to quaternary structure, the complex is composed of two ATP-binding proteins (MalK), two transmembrane proteins (MalG and MalF) and a solute-binding protein (MalE). Post-translationally, glycosylated.

The protein localises to the cell membrane. Its function is as follows. Part of the ABC transporter complex MalEFGK involved in trehalose/maltose import. Binds maltose and trehalose. The chain is Trehalose/maltose-binding protein MalE (malE) from Thermococcus litoralis (strain ATCC 51850 / DSM 5473 / JCM 8560 / NS-C).